Consider the following 186-residue polypeptide: Signal peptidase complex catalytic subunit SEC11 (186 aa).

Residues 1–20 (MDALGLSKLRHLKPRQLLSQ) lie on the Cytoplasmic side of the membrane. Residues 21 to 41 (VLNFALILSTAFMLWKGLSVA) form a helical; Signal-anchor for type II membrane protein membrane-spanning segment. Topologically, residues 42 to 186 (TDSPSPIVVV…MGLLVIVQRE (145 aa)) are lumenal. Catalysis depends on charge relay system residues Ser55, His102, and Asp128. The segment at 172–183 (ALLGIMGLLVIV) is C-terminal short (CTS) helix.

This sequence belongs to the peptidase S26B family. Component of the signal peptidase complex (SPC) composed of a catalytic subunit SEC11 and three accessory subunits SPC1, SPC2 and SPC3. The complex induces a local thinning of the ER membrane which is used to measure the length of the signal peptide (SP) h-region of protein substrates. This ensures the selectivity of the complex towards h-regions shorter than 18-20 amino acids. SPC associates with the translocon complex.

It localises to the endoplasmic reticulum membrane. The catalysed reaction is Cleavage of hydrophobic, N-terminal signal or leader sequences from secreted and periplasmic proteins.. Catalytic component of the signal peptidase complex (SPC) which catalyzes the cleavage of N-terminal signal sequences from nascent proteins as they are translocated into the lumen of the endoplasmic reticulum. Specifically cleaves N-terminal signal peptides that contain a hydrophobic alpha-helix (h-region) shorter than 18-20 amino acids. This Tuber melanosporum (strain Mel28) (Perigord black truffle) protein is Signal peptidase complex catalytic subunit SEC11 (SEC11).